A 161-amino-acid chain; its full sequence is Ribonuclease H (161 aa).

In terms of domain architecture, RNase H type-1 spans 5-149 (EKLAIAAATD…VDAIAVAFSK (145 aa)). Mg(2+) is bound by residues D14, E53, D78, and D141.

This sequence belongs to the RNase H family. As to quaternary structure, monomer. Mg(2+) serves as cofactor.

Its subcellular location is the cytoplasm. The enzyme catalyses Endonucleolytic cleavage to 5'-phosphomonoester.. Functionally, endonuclease that specifically degrades the RNA of RNA-DNA hybrids. This Prochlorococcus marinus (strain NATL2A) protein is Ribonuclease H.